We begin with the raw amino-acid sequence, 283 residues long: MFS-type transporter eupM (283 aa).

A run of 7 helical transmembrane segments spans residues leucine 68 to methionine 88, isoleucine 111 to proline 131, glycine 136 to leucine 156, valine 165 to isoleucine 185, isoleucine 196 to isoleucine 216, phenylalanine 227 to isoleucine 247, and leucine 263 to isoleucine 283.

The protein belongs to the major facilitator superfamily. Monocarboxylate porter (TC 2.A.1.13) family.

It localises to the membrane. MFS-type transporter; part of the gene cluster that mediates the biosynthesis of eupenifeldin, a bistropolone meroterpenoid that acts as an antitumor agent. The protein is MFS-type transporter eupM of Phoma sp.